The following is a 198-amino-acid chain: CASP-like protein 2B1 (198 aa).

The Cytoplasmic segment spans residues 1–12 (MAAAMGLERKAK). The helical transmembrane segment at 13–33 (VAEVALRCAVCALAALAAALV) threads the bilayer. Residues 34-55 (GTGSQTRTFFSLEKKARFTDMK) lie on the Extracellular side of the membrane. The chain crosses the membrane as a helical span at residues 56-76 (ALVLLVAAHGAAAVYSLLQLA). The Cytoplasmic portion of the chain corresponds to 77 to 91 (RCAAAAAWKGGSNGG). Residues 92 to 112 (AAVVAWSVFSCDQAVAYALMA) form a helical membrane-spanning segment. The Extracellular portion of the chain corresponds to 113–149 (ATAAALQSSVVGKRGQPELQWMPVCGLYGAFCRRVGE). A helical transmembrane segment spans residues 150-170 (GLAAAVAAGLAAVLLAAVSAF). Residues 171-198 (NLFRLYGGGGGGRKSSAGAVSGNGANTW) are Cytoplasmic-facing.

Belongs to the Casparian strip membrane proteins (CASP) family. As to quaternary structure, homodimer and heterodimers.

It localises to the cell membrane. The chain is CASP-like protein 2B1 from Oryza sativa subsp. japonica (Rice).